Consider the following 221-residue polypeptide: uncharacterized protein (221 aa).

The span at 1–11 (MGEKSRRKGPA) shows a compositional bias: basic residues. Disordered regions lie at residues 1–23 (MGEKSRRKGPAPRHADGKLGRTC) and 139–169 (SNFQESSPLPHKHERKDKRSTPEEEGRSAPE). 2 stretches are compositionally biased toward basic and acidic residues: residues 13 to 23 (RHADGKLGRTC) and 155 to 168 (DKRSTPEEEGRSAP).

This is an uncharacterized protein from Homo sapiens (Human).